We begin with the raw amino-acid sequence, 481 residues long: Bestrophin homolog 17 (481 aa).

Over 1–27 the chain is Cytoplasmic; it reads MTVSYQLDVSSGNPLLFLRLLGRWRGS. The chain crosses the membrane as a helical span at residues 28 to 48; it reads IWKSVVGDLFVWLLFYYAIYF. The Extracellular segment spans residues 49–95; sequence AYRYAFSKQLQTVFEEISIHTDDRMKYLPLTFMLGFFVTTVFERWRS. Residues 96–116 form a helical membrane-spanning segment; that stretch reads ALNVMPFIESVALSVAVLLPG. Over 117 to 230 the chain is Cytoplasmic; it reads KGREDRLTRR…AMETLIKFDA (114 aa). The helical transmembrane segment at 231–251 threads the bilayer; it reads IPIPIAYPQVVFLAVRVYFAI. The Extracellular portion of the chain corresponds to 252-274; sequence CLVSRQFLISDMKSKTQMDWPVP. Residues 275–295 traverse the membrane as a helical segment; that stretch reads IMTVLEFIFVIGWMKVAEVLL. The Cytoplasmic portion of the chain corresponds to 296–481; it reads NPLGEDDDDF…SSEESVDKKG (186 aa). The segment at 427–481 is disordered; it reads AGMLNKSTQPDRPTMETVSEEHEPSHFYRGDRVHSSDSGLSKTQQSSEESVDKKG. Basic and acidic residues predominate over residues 445 to 461; that stretch reads SEEHEPSHFYRGDRVHS. The span at 462–474 shows a compositional bias: polar residues; the sequence is SDSGLSKTQQSSE.

Belongs to the anion channel-forming bestrophin (TC 1.A.46) family. Calcium-sensitive chloride channel subfamily. As to quaternary structure, forms oligomers.

The protein resides in the cell membrane. In terms of biological role, forms chloride channels. The sequence is that of Bestrophin homolog 17 from Caenorhabditis elegans.